A 188-amino-acid chain; its full sequence is MKVAASSLRKGSVVDMDGKLYVVLSAENIHPGKGTPVTQLNMRRISDGVKVSERYRTTEQVERAFVDDRNHTFLYSDGDGYHFMNPESYDQLVATEDVIGDAAPYLQEGMTVILSTHNDVPIAIDLPRTVVLEIVDTEPSVKGQTASSSYKPAVLSNGVKTTVPPYITAGTKVVILTEDGSYVERAKD.

This sequence belongs to the elongation factor P family.

It is found in the cytoplasm. It participates in protein biosynthesis; polypeptide chain elongation. Involved in peptide bond synthesis. Stimulates efficient translation and peptide-bond synthesis on native or reconstituted 70S ribosomes in vitro. Probably functions indirectly by altering the affinity of the ribosome for aminoacyl-tRNA, thus increasing their reactivity as acceptors for peptidyl transferase. This Caulobacter vibrioides (strain ATCC 19089 / CIP 103742 / CB 15) (Caulobacter crescentus) protein is Elongation factor P.